Here is a 219-residue protein sequence, read N- to C-terminus: Urease subunit gamma/beta (219 aa).

The urease gamma stretch occupies residues methionine 1–serine 101. The urease beta stretch occupies residues serine 102–alanine 219.

The protein in the N-terminal section; belongs to the urease gamma subunit family. In the C-terminal section; belongs to the urease beta subunit family. As to quaternary structure, heterohexamer of 3 UreC (alpha) and 3 UreAB (gamma/beta) subunits.

The protein localises to the cytoplasm. It catalyses the reaction urea + 2 H2O + H(+) = hydrogencarbonate + 2 NH4(+). It functions in the pathway nitrogen metabolism; urea degradation; CO(2) and NH(3) from urea (urease route): step 1/1. The polypeptide is Urease subunit gamma/beta (Sulfurisphaera tokodaii (strain DSM 16993 / JCM 10545 / NBRC 100140 / 7) (Sulfolobus tokodaii)).